The chain runs to 507 residues: MVTIRADEISNIIRERIEQYNREVKIVNTGTVLQVGDGIARIHGLDEVMAGELVEFEEGTIGIALNLESNNVGVVLMGDGLLIQEGSSVKATGRIAQIPVSEAYLGRVVNALAKPIDGRGEISASEFRLIESAAPGIISRRSVYEPLQTGLIAIDSMIPIGRGQRELIIGDRQTGKTAVATDTILNQQGQNVICVYVAIGQKASSVAQVVTTLQERGAMEYTIVVAETADSPATLQYLAPYTGAALAEYFMYRERHTLIIYDDLSKQAQAYRQMSLLLRRPPGREAYPGDVFYLHSRLLERAAKLSSSLGEGSMTALPIVETQSGDVSAYIPTNVISITDGQIFLSADLFNSGIRPAINVGISVSRVGSAAQIKAMKQVAGKLKLELAQFAELEAFAQFASDLDKATQNQLARGQRLRELLKQSQSAPLTVEEQIMTIYTGTNGYLDSLEVGQVRKFLVELRTYLKTTKPQFQEIISSTKTFTEEAEALLKEAIQEQMDRFILQEQA.

Residue 170–177 participates in ATP binding; sequence GDRQTGKT.

The protein belongs to the ATPase alpha/beta chains family. F-type ATPases have 2 components, CF(1) - the catalytic core - and CF(0) - the membrane proton channel. CF(1) has five subunits: alpha(3), beta(3), gamma(1), delta(1), epsilon(1). CF(0) has four main subunits: a, b, b' and c.

Its subcellular location is the plastid. It localises to the chloroplast thylakoid membrane. The catalysed reaction is ATP + H2O + 4 H(+)(in) = ADP + phosphate + 5 H(+)(out). In terms of biological role, produces ATP from ADP in the presence of a proton gradient across the membrane. The alpha chain is a regulatory subunit. This chain is ATP synthase subunit alpha, chloroplastic, found in Solanum bulbocastanum (Wild potato).